The chain runs to 1034 residues: Enteropeptidase (1034 aa).

A propeptide spanning residues 1–51 (MGSKRIIPSRHRSLSTYEVMFTALFAILMVLCAGLIAVSWLTIKGSEKDAA) is cleaved from the precursor. The Cytoplasmic portion of the chain corresponds to 2–18 (GSKRIIPSRHRSLSTYE). The chain crosses the membrane as a helical; Signal-anchor for type II membrane protein span at residues 19–47 (VMFTALFAILMVLCAGLIAVSWLTIKGSE). Topologically, residues 48 to 1034 (KDAALGKSHE…FTEWIQSFLH (987 aa)) are extracellular. Residues 54-169 (KSHEARGTMK…NSIDITESLE (116 aa)) form the SEA domain. N-linked (GlcNAc...) asparagine glycosylation is found at N116, N147, N170, and N194. Residues 197 to 238 (IECLPGSRPCADALKCIAVDLFCDGELNCPDGSDEDSKICAT) enclose the LDL-receptor class A 1 domain. Cystine bridges form between C199-C212, C206-C225, C219-C236, and C240-C268. The CUB 1 domain maps to 240 to 349 (CDGKFLLTES…IGFNATYTAF (110 aa)). Residues N283, N343, N350, N403, N455, N485, N518, N549, and N645 are each glycosylated (N-linked (GlcNAc...) asparagine). Residues 357–519 (DEKINCNFED…ISLTYGICNV (163 aa)) enclose the MAM domain. C539 and C567 are joined by a disulfide. A CUB 2 domain is found at 539 to 649 (CGGPFELWEP…GGFKANFTTG (111 aa)). Residues 656–694 (EPCKEDNFQCENGECVLLVNLCDGFSHCKDGSDEAHCVR) enclose the LDL-receptor class A 2 domain. 3 disulfide bridges follow: C658–C670, C665–C683, and C677–C692. One can recognise an SRCR domain in the interval 693 to 786 (VRFLNGTANN…LILLQCNHKS (94 aa)). N697, N701, N721, N740, and N761 each carry an N-linked (GlcNAc...) asparagine glycan. 6 cysteine pairs are disulfide-bonded: C772–C782, C787–C911, C825–C841, C925–C992, C956–C971, and C982–C1010. The Peptidase S1 domain occupies 800–1034 (IVGGNDSREG…FTEWIQSFLH (235 aa)). N-linked (GlcNAc...) asparagine glycosylation occurs at N804. The active-site Charge relay system is the H840. The N-linked (GlcNAc...) asparagine glycan is linked to N863. D891 serves as the catalytic Charge relay system. N-linked (GlcNAc...) asparagine glycosylation is found at N902 and N964. The active-site Charge relay system is the S986.

This sequence belongs to the peptidase S1 family. Heterotrimer of a catalytic (light) chain, a multidomain (heavy) chain, and a mini chain. Post-translationally, the chains are derived from a single precursor that is cleaved by a trypsin-like protease. The mini chain may be cleaved by elastase.

It localises to the membrane. It carries out the reaction Activation of trypsinogen by selective cleavage of 6-Lys-|-Ile-7 bond.. In terms of biological role, responsible for initiating activation of pancreatic proteolytic proenzymes (trypsin, chymotrypsin and carboxypeptidase A). It catalyzes the conversion of trypsinogen to trypsin which in turn activates other proenzymes including chymotrypsinogen, procarboxypeptidases, and proelastases. This is Enteropeptidase (TMPRSS15) from Sus scrofa (Pig).